A 580-amino-acid polypeptide reads, in one-letter code: Frizzled and smoothened-like protein K (580 aa).

Residues 1-18 (MRVLFILFLFYFYTYTEA) form the signal peptide. Topologically, residues 19 to 236 (QQYYPIDPTG…QWDNIFDTSD (218 aa)) are extracellular. Positions 25-154 (DPTGKCEQYI…SSDYNLTTYG (130 aa)) constitute an FZ domain. Asparagine 52, asparagine 97, asparagine 149, asparagine 170, and asparagine 186 each carry an N-linked (GlcNAc...) asparagine glycan. The chain crosses the membrane as a helical span at residues 237–257 (AISLVSLLCSVYLFITYMVIN). Residues 258–264 (PKRNKYD) lie on the Cytoplasmic side of the membrane. A helical transmembrane segment spans residues 265 to 285 (YFFSFFVLSIILMSIAGTIGF). Over 286 to 308 (SVGGTRKLLCPEINRRGVYTDPA) the chain is Extracellular. A helical transmembrane segment spans residues 309–329 (VAAAGWIFQFAIINAILWFSI). Over 330-349 (NSFELWFQIKFIKRKLHLIK) the chain is Cytoplasmic. The helical transmembrane segment at 350–370 (FYILAVLVISIALSVPLSAIG) threads the bilayer. Residues 371 to 391 (EFNAGLGNFVVWIESGKYQNW) lie on the Extracellular side of the membrane. A helical membrane pass occupies residues 392–412 (FFWGPLGIVLTVGTTFIGLVI). At 413-434 (WEIYKIVSSTNKSDFFKLQLKP) the chain is on the cytoplasmic side. The helical transmembrane segment at 435–455 (LMNMLLIYLTFVYLFGYNFYI) threads the bilayer. The Extracellular segment spans residues 456-490 (HNSLNGFYGSSEEFKNCIISTDGKDCRIQGPPYSS). The chain crosses the membrane as a helical span at residues 491-511 (ILMFVFCLRIYGVYCIALYGF). Over 512–580 (SPKTRSIWSN…SMEPDEIILR (69 aa)) the chain is Cytoplasmic. A Lys-Thr-X-X-X-Trp motif, mediates interaction with the PDZ domain of Dvl family members motif is present at residues 514–519 (KTRSIW). The segment at 542–580 (TTKGGTSSTDIKMSTNNNSNMDSGGGKSSSMEPDEIILR) is disordered. A compositionally biased stretch (polar residues) spans 551–563 (DIKMSTNNNSNMD).

This sequence belongs to the G-protein coupled receptor Fz/Smo family.

It localises to the membrane. This is Frizzled and smoothened-like protein K (fslK) from Dictyostelium discoideum (Social amoeba).